The primary structure comprises 103 residues: Small ribosomal subunit protein bS6c (103 aa).

It belongs to the bacterial ribosomal protein bS6 family.

Its subcellular location is the plastid. The protein resides in the chloroplast. In terms of biological role, binds together with bS18 to 16S ribosomal RNA. The chain is Small ribosomal subunit protein bS6c (rps6) from Cyanidium caldarium (Red alga).